Reading from the N-terminus, the 94-residue chain is uncharacterized protein (94 aa).

2 helical membrane-spanning segments follow: residues 9 to 29 (TLAK…FFST) and 34 to 54 (LIEL…VFIV).

It localises to the cell membrane. This is an uncharacterized protein from Bacillus subtilis (strain 168).